A 78-amino-acid chain; its full sequence is D-alanyl carrier protein (78 aa).

The Carrier domain occupies 1–78; the sequence is MNIQETVLNI…QIIQQVEALQ (78 aa). Ser-36 carries the O-(pantetheine 4'-phosphoryl)serine modification.

It belongs to the DltC family. 4'-phosphopantetheine is transferred from CoA to a specific serine of apo-DCP.

The protein resides in the cytoplasm. It participates in cell wall biogenesis; lipoteichoic acid biosynthesis. Its function is as follows. Carrier protein involved in the D-alanylation of lipoteichoic acid (LTA). The loading of thioester-linked D-alanine onto DltC is catalyzed by D-alanine--D-alanyl carrier protein ligase DltA. The DltC-carried D-alanyl group is further transferred to cell membrane phosphatidylglycerol (PG) by forming an ester bond, probably catalyzed by DltD. D-alanylation of LTA plays an important role in modulating the properties of the cell wall in Gram-positive bacteria, influencing the net charge of the cell wall. This Enterococcus faecalis (strain ATCC 700802 / V583) protein is D-alanyl carrier protein.